The sequence spans 615 residues: Pre-hexon-linking protein IIIa (615 aa).

Residues 1 to 92 form a peripentonal hexon-tethering domain region; that stretch reads MDPGLKPSSS…DLLIRVHKYN (92 aa). The binding to hexon-linking protein stretch occupies residues 124 to 238; the sequence is SNQVILNDFL…FTNENTFTPD (115 aa). Serine 212 carries the phosphoserine; by host modification. Threonine 262 carries the post-translational modification Phosphothreonine; by host. Residues 400 to 409 show a composition bias toward basic and acidic residues; that stretch reads EREALEEAGP. 2 disordered regions span residues 400 to 473 and 528 to 615; these read EREA…SVDS and GERI…NGLK. 2 stretches are compositionally biased toward low complexity: residues 419–430 and 451–460; these read PSSSPQSSKIQS and SVRSAPPSVS. Position 451 is a phosphoserine; by host (serine 451). Residues 539 to 548 are compositionally biased toward basic and acidic residues; the sequence is RAEIERRRIA. Low complexity predominate over residues 557 to 570; it reads PSLSSESSAPSLSS. The propeptide occupies 602 to 615; it reads GNPFDYLRPRNGLK.

Belongs to the adenoviridae hexon-linking protein IIIa family. As to quaternary structure, interacts with hexon proteins; this interaction tethers the peripentonal hexons to hexons situated in the facet. Interacts with the penton protein (via N-terminus). Interacts with packaging protein 3; this interaction is required to promote correct genome packaging. Post-translationally, cleaved near the C-terminus by the viral protease during virion maturation to form the mature protein.

The protein resides in the virion. It is found in the host nucleus. In terms of biological role, structural component of the virion that acts as a cement protein on the capsid exterior which mediates the interactions between the hexons, including the peripentonal hexons, and reaches all the way to the penton vertices. Two hexon linking proteins IIIa, one from each facet, stabilize the unique edge interface between a pair of facets. As the virus enters the host cell, hexon linking proteins IIIa are shed concomitant with virion acidification in the endosome. During virus assembly, seems to play a role in the serotype specificity of the packaging of viral DNA via its interaction with packaging protein 3. In Snake adenovirus serotype 1 (SnAdV-1), this protein is Pre-hexon-linking protein IIIa.